The following is a 426-amino-acid chain: Glutamyl-tRNA reductase (426 aa).

Residues 49 to 52, serine 109, 114 to 116, and glutamine 120 contribute to the substrate site; these read TCNR and EGQ. Cysteine 50 (nucleophile) is an active-site residue. 189–194 contributes to the NADP(+) binding site; that stretch reads GAGETG.

Belongs to the glutamyl-tRNA reductase family. As to quaternary structure, homodimer.

It catalyses the reaction (S)-4-amino-5-oxopentanoate + tRNA(Glu) + NADP(+) = L-glutamyl-tRNA(Glu) + NADPH + H(+). It functions in the pathway porphyrin-containing compound metabolism; protoporphyrin-IX biosynthesis; 5-aminolevulinate from L-glutamyl-tRNA(Glu): step 1/2. The protein operates within porphyrin-containing compound metabolism; chlorophyll biosynthesis. In terms of biological role, catalyzes the NADPH-dependent reduction of glutamyl-tRNA(Glu) to glutamate 1-semialdehyde (GSA). This chain is Glutamyl-tRNA reductase, found in Prosthecochloris aestuarii (strain DSM 271 / SK 413).